A 186-amino-acid polypeptide reads, in one-letter code: Large ribosomal subunit protein uL10 (186 aa).

Belongs to the universal ribosomal protein uL10 family. In terms of assembly, part of the ribosomal stalk of the 50S ribosomal subunit. The N-terminus interacts with L11 and the large rRNA to form the base of the stalk. The C-terminus forms an elongated spine to which L12 dimers bind in a sequential fashion forming a multimeric L10(L12)X complex.

Functionally, forms part of the ribosomal stalk, playing a central role in the interaction of the ribosome with GTP-bound translation factors. The protein is Large ribosomal subunit protein uL10 of Rhodococcus jostii (strain RHA1).